Reading from the N-terminus, the 419-residue chain is MYEPTLTVESFDSELAGAIRDERRRQEHHVELIASENYVSPRVLELQGSVLTNKYAEGYPGRRYYAGCEFVDIAEQLAIDRAKELFGADYANVQPHSGSQANAEAYMALMNPGDTLLAMDLSHGGHLTHGSPVSFSGKFYKAVHYGLNAHGDIDYEQAAQLAQEHKPKVILAGFSAFSGIVDWQRFREIADSVNAYFMTDIAHVAGLVAAGVYPSPVQIADVTTTTTHKTLRGPRAGLILAKANPELEKRLNSAVFPGSQGGPLMHIIAAKAVAFKEAMQPEFKTYAQQILKNAKAMAEVMKERDYTIVSGGTQNHLFLVSLLNKNISGKEAEAALGRANITVNKNTVPGETRSPFVTSGLRIGTPAITTRGFKEKEASQLAHWVCDILDDIHNEKVIADVKQKAHELCGKFPVYQELD.

(6S)-5,6,7,8-tetrahydrofolate contacts are provided by residues Leu-121 and 125–127 (GHL). N6-(pyridoxal phosphate)lysine is present on Lys-229. Position 354–356 (354–356 (SPF)) interacts with (6S)-5,6,7,8-tetrahydrofolate.

It belongs to the SHMT family. Homodimer. It depends on pyridoxal 5'-phosphate as a cofactor.

Its subcellular location is the cytoplasm. The enzyme catalyses (6R)-5,10-methylene-5,6,7,8-tetrahydrofolate + glycine + H2O = (6S)-5,6,7,8-tetrahydrofolate + L-serine. It functions in the pathway one-carbon metabolism; tetrahydrofolate interconversion. Its pathway is amino-acid biosynthesis; glycine biosynthesis; glycine from L-serine: step 1/1. Catalyzes the reversible interconversion of serine and glycine with tetrahydrofolate (THF) serving as the one-carbon carrier. This reaction serves as the major source of one-carbon groups required for the biosynthesis of purines, thymidylate, methionine, and other important biomolecules. Also exhibits THF-independent aldolase activity toward beta-hydroxyamino acids, producing glycine and aldehydes, via a retro-aldol mechanism. This chain is Serine hydroxymethyltransferase, found in Coxiella burnetii (strain CbuG_Q212) (Coxiella burnetii (strain Q212)).